The sequence spans 449 residues: Polyadenylation factor subunit 2 (449 aa).

WD repeat units follow at residues 77–116, 119–158, 161–200, 203–242, 245–285, 288–328, and 337–376; these read KVKH…FESI, AHDS…VKVL, AHTE…QERV, GHHW…NVST, GLKH…RELQ, RDDM…SNST, and AHEK…DPNA. A disordered region spans residues 411–432; the sequence is LPPANETNLGTPQPSILGSESI. The span at 415-432 shows a compositional bias: polar residues; sequence NETNLGTPQPSILGSESI.

The protein resides in the nucleus. Required for 3'-end cleavage and polyadenylation of pre-mRNAs. Also involved in chromosome segregation where it has a role in chromosome attachment to the mitotic spindle. The chain is Polyadenylation factor subunit 2 (PSF2) from Eremothecium gossypii (strain ATCC 10895 / CBS 109.51 / FGSC 9923 / NRRL Y-1056) (Yeast).